Here is a 77-residue protein sequence, read N- to C-terminus: MKLIIFTGLVLFAIVSLIEAEEESGRVCIPLNGECSKSPDKCCDNINCDCYLRFEKGVQTGRPCFCTEKDVIFERDE.

Residues 1-20 form the signal peptide; that stretch reads MKLIIFTGLVLFAIVSLIEA. Residues 21–26 constitute a propeptide that is removed on maturation; that stretch reads EEESGR.

The protein belongs to the neurotoxin 19 (CSTX) family. 09 (U10-Lctx) subfamily. Contains 4 disulfide bonds. As to expression, expressed by the venom gland.

The protein localises to the secreted. The chain is U10-lycotoxin-Ls1a from Lycosa singoriensis (Wolf spider).